The primary structure comprises 514 residues: Periplasmic [NiFeSe] hydrogenase large subunit (514 aa).

Residue E52 coordinates Fe cation. Ni(2+) contacts are provided by C71 and C74. Fe cation is bound by residues C74 and I445. Positions 493 and 496 each coordinate Ni(2+). Position 493 (U493) is a non-standard amino acid, selenocysteine. C496 and H499 together coordinate Fe cation.

This sequence belongs to the [NiFe]/[NiFeSe] hydrogenase large subunit family. In terms of assembly, heterodimer of a large and a small subunit. It depends on Fe cation as a cofactor. Ni(2+) serves as cofactor.

It is found in the periplasm. The enzyme catalyses H2 + A = AH2. The chain is Periplasmic [NiFeSe] hydrogenase large subunit from Desulfomicrobium baculatum (Desulfovibrio baculatus).